The following is an 84-amino-acid chain: Small ribosomal subunit protein bS20 (84 aa).

Residues 1–22 are disordered; the sequence is MPAPTKRERQNRKRFERNRSVR. Residues 9–22 show a composition bias toward basic residues; that stretch reads RQNRKRFERNRSVR.

It belongs to the bacterial ribosomal protein bS20 family.

Binds directly to 16S ribosomal RNA. The chain is Small ribosomal subunit protein bS20 from Rubrobacter xylanophilus (strain DSM 9941 / JCM 11954 / NBRC 16129 / PRD-1).